A 477-amino-acid chain; its full sequence is UDP-N-acetylmuramate--L-alanine ligase (477 aa).

Residue 125 to 131 (GTHGKTT) participates in ATP binding.

Belongs to the MurCDEF family.

It is found in the cytoplasm. The enzyme catalyses UDP-N-acetyl-alpha-D-muramate + L-alanine + ATP = UDP-N-acetyl-alpha-D-muramoyl-L-alanine + ADP + phosphate + H(+). It participates in cell wall biogenesis; peptidoglycan biosynthesis. In terms of biological role, cell wall formation. The chain is UDP-N-acetylmuramate--L-alanine ligase from Acidothermus cellulolyticus (strain ATCC 43068 / DSM 8971 / 11B).